The chain runs to 620 residues: Proline--tRNA ligase (620 aa).

The protein belongs to the class-II aminoacyl-tRNA synthetase family. ProS type 1 subfamily. As to quaternary structure, homodimer.

Its subcellular location is the cytoplasm. It carries out the reaction tRNA(Pro) + L-proline + ATP = L-prolyl-tRNA(Pro) + AMP + diphosphate. Functionally, catalyzes the attachment of proline to tRNA(Pro) in a two-step reaction: proline is first activated by ATP to form Pro-AMP and then transferred to the acceptor end of tRNA(Pro). As ProRS can inadvertently accommodate and process non-cognate amino acids such as alanine and cysteine, to avoid such errors it has two additional distinct editing activities against alanine. One activity is designated as 'pretransfer' editing and involves the tRNA(Pro)-independent hydrolysis of activated Ala-AMP. The other activity is designated 'posttransfer' editing and involves deacylation of mischarged Ala-tRNA(Pro). The misacylated Cys-tRNA(Pro) is not edited by ProRS. In Streptococcus suis (strain 98HAH33), this protein is Proline--tRNA ligase.